The chain runs to 248 residues: 3-deoxy-manno-octulosonate cytidylyltransferase (248 aa).

The protein belongs to the KdsB family.

It localises to the cytoplasm. It catalyses the reaction 3-deoxy-alpha-D-manno-oct-2-ulosonate + CTP = CMP-3-deoxy-beta-D-manno-octulosonate + diphosphate. Its pathway is nucleotide-sugar biosynthesis; CMP-3-deoxy-D-manno-octulosonate biosynthesis; CMP-3-deoxy-D-manno-octulosonate from 3-deoxy-D-manno-octulosonate and CTP: step 1/1. It participates in bacterial outer membrane biogenesis; lipopolysaccharide biosynthesis. Activates KDO (a required 8-carbon sugar) for incorporation into bacterial lipopolysaccharide in Gram-negative bacteria. The polypeptide is 3-deoxy-manno-octulosonate cytidylyltransferase (Cronobacter sakazakii (strain ATCC BAA-894) (Enterobacter sakazakii)).